The following is a 226-amino-acid chain: MLVEDDHSISEMVDHYLTKEGFGIVHAFDGEEGIRLFQQGSYDLVLLDIMLPKLNGMDFLKIIREKSNIPVLMISAKDGDVDKALGLGFGADDYIAKPFSMIELTARVKAAIRRATQYSAEEPAVNKVIRIHQLAIDIDNVSVLKNGEPLQLTSTEWQLLCLFASNPKKVFTKEQIYRSVWNEEYFDDQNIINVHMRRLREKIEDDPSSPQYIKTLWGIGYKLGEF.

The Response regulatory domain maps to 1–112; sequence MLVEDDHSIS…ELTARVKAAI (112 aa). D48 carries the post-translational modification 4-aspartylphosphate. The ompR/PhoB-type DNA-binding region spans 126–225; that stretch reads NKVIRIHQLA…LWGIGYKLGE (100 aa).

Post-translationally, phosphorylated by YcbM.

The protein resides in the cytoplasm. Functionally, member of the two-component regulatory system YcbM/YcbL. This is an uncharacterized protein from Bacillus subtilis (strain 168).